The primary structure comprises 182 residues: Large ribosomal subunit protein uL6 (182 aa).

This sequence belongs to the universal ribosomal protein uL6 family. As to quaternary structure, part of the 50S ribosomal subunit.

Its function is as follows. This protein binds to the 23S rRNA, and is important in its secondary structure. It is located near the subunit interface in the base of the L7/L12 stalk, and near the tRNA binding site of the peptidyltransferase center. The protein is Large ribosomal subunit protein uL6 of Dehalococcoides mccartyi (strain CBDB1).